We begin with the raw amino-acid sequence, 529 residues long: Neuronal acetylcholine receptor subunit alpha-2 (529 aa).

Residues 1–26 (MGPSCPVFLSFTKLSLWWLLLTPAGG) form the signal peptide. Positions 27 to 56 (EEAKRPPPRAPGDPLSSPSPTALPQGGSHT) are disordered. At 27-264 (EEAKRPPPRA…VTYAFVIRRL (238 aa)) the chain is on the extracellular side. Asn-79 and Asn-129 each carry an N-linked (GlcNAc...) asparagine glycan. A disulfide bridge connects residues Cys-183 and Cys-197. An N-linked (GlcNAc...) asparagine glycan is attached at Asn-235. Cys-247 and Cys-248 are disulfide-bonded. 3 helical membrane-spanning segments follow: residues 265-289 (PLFY…VFYL), 297-315 (ITLC…LLIT), and 331-352 (YLLF…VLNV). Residues 353–502 (HHRSPSTHTM…WKYVAMVIDR (150 aa)) are Cytoplasmic-facing. Residues 503–521 (IFLWLFIIVCFLGTIGLFL) form a helical membrane-spanning segment.

This sequence belongs to the ligand-gated ion channel (TC 1.A.9) family. Acetylcholine receptor (TC 1.A.9.1) subfamily. Alpha-2/CHRNA2 sub-subfamily. As to quaternary structure, neuronal AChR is composed of two different types of subunits: alpha and non-alpha (beta). CHRNA2/alpha-2 subunit can be combined to CHRNB2/beta-2 or CHRNB4/beta-4 to give rise to functional receptors. Both CHRNA2:CHRNB2 and CHRNA2:CHRNB4 nAChR complexes are heteropentamers with two subtypes: LS (low agonist sensitivity) with a (CHRNA2)3:(CHRNB2/4)2 and HS (high agonist sensitivity) with a (CHRNA2)2:(CHRNB2/4)3 stoichiometries; the subtypes differ in their subunit binding interfaces which are involved in ligand binding.

Its subcellular location is the synaptic cell membrane. It is found in the cell membrane. It catalyses the reaction Ca(2+)(in) = Ca(2+)(out). It carries out the reaction K(+)(in) = K(+)(out). The enzyme catalyses Na(+)(in) = Na(+)(out). In terms of biological role, component of neuronal acetylcholine receptors (nAChRs) that function as pentameric, ligand-gated cation channels with high calcium permeability among other activities. nAChRs are excitatory neurotrasnmitter receptors formed by a collection of nAChR subunits known to mediate synaptic transmission in the nervous system and the neuromuscular junction. Each nAchR subunit confers differential attributes to channel properties, including activation, deactivation and desensitization kinetics, pH sensitivity, cation permeability, and binding to allosteric modulators. CHRNA2 forms heteropentameric neuronal acetylcholine receptors with CHRNB2 and CHRNB4 and plays a role in nicotine dependence. This Homo sapiens (Human) protein is Neuronal acetylcholine receptor subunit alpha-2.